Here is a 258-residue protein sequence, read N- to C-terminus: 1-(5-phosphoribosyl)-5-[(5-phosphoribosylamino)methylideneamino] imidazole-4-carboxamide isomerase (258 aa).

Asp9 functions as the Proton acceptor in the catalytic mechanism. The active-site Proton donor is the Asp131.

Belongs to the HisA/HisF family.

It is found in the cytoplasm. The enzyme catalyses 1-(5-phospho-beta-D-ribosyl)-5-[(5-phospho-beta-D-ribosylamino)methylideneamino]imidazole-4-carboxamide = 5-[(5-phospho-1-deoxy-D-ribulos-1-ylimino)methylamino]-1-(5-phospho-beta-D-ribosyl)imidazole-4-carboxamide. Its pathway is amino-acid biosynthesis; L-histidine biosynthesis; L-histidine from 5-phospho-alpha-D-ribose 1-diphosphate: step 4/9. The protein is 1-(5-phosphoribosyl)-5-[(5-phosphoribosylamino)methylideneamino] imidazole-4-carboxamide isomerase of Salinibacter ruber (strain DSM 13855 / M31).